The following is a 127-amino-acid chain: Modulator protein MzrA (127 aa).

Residues 1–10 (MVISPLALRR) are Cytoplasmic-facing. Residues 11–31 (LSYGLIALVLLSALILVWTAL) form a helical membrane-spanning segment. Topologically, residues 32–127 (QRQESTLAIR…RLRDTSHRFG (96 aa)) are periplasmic.

The protein belongs to the MzrA family. Interacts with EnvZ.

It is found in the cell inner membrane. In terms of biological role, modulates the activity of the EnvZ/OmpR two-component regulatory system, probably by directly modulating EnvZ enzymatic activity and increasing stability of phosphorylated OmpR. In Enterobacter sp. (strain 638), this protein is Modulator protein MzrA.